A 367-amino-acid polypeptide reads, in one-letter code: Popeye domain-containing protein 2 (367 aa).

N-linked (GlcNAc...) asparagine glycosylation is present at Asn-4. 2 helical membrane passes run 36 to 56 (FLLM…LFGI) and 77 to 97 (IVLW…QLVY). Disordered regions lie at residues 273–292 (PSAS…ALEA) and 312–367 (APPA…TPEL). Residues 278 to 290 (GEPESEKDDEEAL) show a composition bias toward acidic residues. Over residues 344–356 (PLQNSSQVMSRSQ) the composition is skewed to polar residues. Asn-347 carries an N-linked (GlcNAc...) asparagine glycan. Thr-364 is subject to Phosphothreonine.

The protein belongs to the popeye family. In terms of tissue distribution, expressed in the developing and adult heart, with high expression levels in the sinus and atrioventricular nodes. Also expressed in the bladder and skeletal muscle.

It is found in the membrane. The protein localises to the cell membrane. The protein resides in the sarcolemma. Important for the maintenance of cardiac function. Plays a regulatory function in heart rate dynamics mediated, at least in part, through cAMP-binding and, probably, by increasing cell surface expression of the potassium channel KCNK2 and enhancing current density. In Mus musculus (Mouse), this protein is Popeye domain-containing protein 2 (Popdc2).